The chain runs to 725 residues: Ribosomal RNA large subunit methyltransferase K/L (725 aa).

Residues 46-157 enclose the THUMP domain; that stretch reads VGYRLCLWSR…KGQAVLSLDL (112 aa).

The protein belongs to the methyltransferase superfamily. RlmKL family.

It is found in the cytoplasm. It catalyses the reaction guanosine(2445) in 23S rRNA + S-adenosyl-L-methionine = N(2)-methylguanosine(2445) in 23S rRNA + S-adenosyl-L-homocysteine + H(+). It carries out the reaction guanosine(2069) in 23S rRNA + S-adenosyl-L-methionine = N(2)-methylguanosine(2069) in 23S rRNA + S-adenosyl-L-homocysteine + H(+). In terms of biological role, specifically methylates the guanine in position 2445 (m2G2445) and the guanine in position 2069 (m7G2069) of 23S rRNA. This Stutzerimonas stutzeri (strain A1501) (Pseudomonas stutzeri) protein is Ribosomal RNA large subunit methyltransferase K/L.